The following is a 390-amino-acid chain: Outer membrane protein assembly factor BamB (390 aa).

A signal peptide spans 1–25 (MPVLRDRIPRRGFFLGLALLAALSG). A lipid anchor (N-palmitoyl cysteine) is attached at C26. A lipid anchor (S-diacylglycerol cysteine) is attached at C26.

Belongs to the BamB family. Part of the Bam complex.

Its subcellular location is the cell outer membrane. Part of the outer membrane protein assembly complex, which is involved in assembly and insertion of beta-barrel proteins into the outer membrane. The chain is Outer membrane protein assembly factor BamB from Marinobacter adhaerens (strain DSM 23420 / HP15).